The primary structure comprises 781 residues: Chloride channel protein CLC-f (781 aa).

Disordered stretches follow at residues 1-41 (MSSG…QSPA) and 79-98 (RERH…EEDG). A compositionally biased stretch (basic and acidic residues) spans 10–20 (NEDRHLLRSTD). Transmembrane regions (helical) follow at residues 129–149 (WALL…VAGF), 184–204 (ILLI…LLEI), 221–241 (FLAG…LGTG), 250–270 (SVDI…NNRE), 279–299 (GAAS…FFAI), 314–334 (FTTA…NALL), 350–370 (AAEL…SVVF), 388–408 (FGLP…IIAL), 433–453 (APGI…TALC), 457–477 (GLVG…GAVF), 502–522 (ALVG…TSVL), and 523–543 (LLFE…AVGL). The disordered stretch occupies residues 553-584 (QGKESDSSEGRSTGRGYSSLSPSERKTEGVWR). Residues 575–584 (SERKTEGVWR) are compositionally biased toward basic and acidic residues. CBS domains follow at residues 621–677 (MSKN…NAST) and 699–763 (QERG…EMSR). A helical transmembrane segment spans residues 726-746 (QLPVVKRGEVIHKGKRRKLLG).

It belongs to the chloride channel (TC 2.A.49) family. Homodimer.

Its subcellular location is the membrane. In terms of biological role, voltage-gated chloride channel. The protein is Chloride channel protein CLC-f (CLC-F) of Arabidopsis thaliana (Mouse-ear cress).